Here is a 172-residue protein sequence, read N- to C-terminus: uncharacterized protein (172 aa).

Residues 1–101 lie on the Lumenal side of the membrane; it reads MEHVSKRSIG…RYDINTRPLV (101 aa). A helical transmembrane segment spans residues 102-122; the sequence is VVLAISIVFFGCLLVLKDIII. Residues 123–145 lie on the Cytoplasmic side of the membrane; sequence QSSENILSVSKWKIIGASFMGTP. Residues 146 to 164 traverse the membrane as a helical segment; that stretch reads YTGLLTGLVGPLLSPFSAV. Over 165–172 the chain is Lumenal; sequence SSWLSFIF.

The protein localises to the endoplasmic reticulum membrane. This is an uncharacterized protein from Saccharomyces cerevisiae (strain ATCC 204508 / S288c) (Baker's yeast).